We begin with the raw amino-acid sequence, 843 residues long: Speckle targeted PIP5K1A-regulated poly(A) polymerase (843 aa).

The Matrin-type zinc-finger motif lies at 25 to 55; the sequence is FRCLLCGVNIPNRPSLTDHLSGRRHVRLHEE. In terms of domain architecture, RRM spans 54-126; the sequence is EERDKRNQQQ…ALEEPQIKLS (73 aa). Positions 134 to 146 are enriched in basic residues; the sequence is PREKKEFQRKKGG. The interval 134-157 is disordered; that stretch reads PREKKEFQRKKGGSPRTLQPPDPE. Serine 215 provides a ligand contact to ATP. Mg(2+) contacts are provided by aspartate 226 and aspartate 228. Residues aspartate 226 and aspartate 228 each coordinate UTP. The span at 241–255 shows a compositional bias: basic and acidic residues; that stretch reads VEGKAEKEIQNREES. The disordered stretch occupies residues 241-292; that stretch reads VEGKAEKEIQNREESSTDMEVSMEDPETERKEEEMEIGNSKNDEDEDVTPGL. Asparagine 354 is an ATP binding site. Asparagine 354, arginine 376, tyrosine 398, and histidine 516 together coordinate UTP. In terms of domain architecture, PAP-associated spans 456–516; sequence SLSSLLSEFF…NIQDPFELSH (61 aa). The tract at residues 564–837 is KA1; binds the bulging loops of U6 snRNA but is dispensable for terminal uridylyltransferase activity; that stretch reads PPTERECVGR…YLPRMVAQIQ (274 aa). The tract at residues 653 to 691 is disordered; it reads QNNTKEASKQKSIFKTEEGMTESARRKREMTEPCMSDMT. Residues 658-670 show a composition bias toward basic and acidic residues; it reads EASKQKSIFKTEE.

It belongs to the DNA polymerase type-B-like family. In terms of assembly, associates with the cleavage and polyadenylation specificity factor (CPSF) complex. Requires Mg(2+) as cofactor. It depends on Mn(2+) as a cofactor.

Its subcellular location is the nucleus. It is found in the nucleolus. The protein localises to the nucleus speckle. The enzyme catalyses RNA(n) + UTP = RNA(n)-3'-uridine ribonucleotide + diphosphate. It catalyses the reaction RNA(n) + ATP = RNA(n)-3'-adenine ribonucleotide + diphosphate. Functionally, poly(A) polymerase that creates the 3'-poly(A) tail of specific pre-mRNAs. In addition to polyadenylation, it is also required for the 3'-end cleavage of pre-mRNAs: binds to the 3'UTR of targeted pre-mRNAs and promotes the recruitment and assembly of the CPSF complex on the 3'UTR of pre-mRNAs. In addition to adenylyltransferase activity, also has uridylyltransferase activity. However, the ATP ratio is higher than UTP in cells, suggesting that it functions primarily as a poly(A) polymerase. The sequence is that of Speckle targeted PIP5K1A-regulated poly(A) polymerase (tut1) from Xenopus tropicalis (Western clawed frog).